The chain runs to 490 residues: Probable cytochrome P450 518B1 (490 aa).

The helical transmembrane segment at 2–22 threads the bilayer; it reads LTNIIILIILYLFYDFCYKNF. A heme-binding site is contributed by cysteine 437.

This sequence belongs to the cytochrome P450 family. Requires heme as cofactor.

Its subcellular location is the membrane. This is Probable cytochrome P450 518B1 (cyp518B1) from Dictyostelium discoideum (Social amoeba).